Here is an 857-residue protein sequence, read N- to C-terminus: Autoinducer 2 sensor kinase/phosphatase LuxQ (857 aa).

2 helical membrane-spanning segments follow: residues 14-34 (IASFITHAVVVVMGVLIVSVL) and 283-303 (FWMAFALISMIGVSIASRWWL). The 221-residue stretch at 486 to 706 (KMSHELRTPL…RFEIQLPIEL (221 aa)) folds into the Histidine kinase domain. A Phosphohistidine; by autocatalysis modification is found at His489. Residues 731–846 (RVLLVEDNHT…TLHKALEHFK (116 aa)) enclose the Response regulatory domain. Asp780 is modified (4-aspartylphosphate).

As to quaternary structure, binds the complex formed by AI-2 and LuxP.

The protein resides in the cell inner membrane. It catalyses the reaction ATP + protein L-histidine = ADP + protein N-phospho-L-histidine.. Functionally, at low cell density, in absence of AI-2 (autoinducer 2), LuxQ has a kinase activity and autophosphorylates on a histidine residue. The phosphoryl group is then transferred to an aspartate residue in the response regulator domain. The phosphoryl group is transferred to LuxU, and ultimately to LuxO. At high cell density, in the presence of AI-2, the kinase activity is inactivated, and the response regulator domain has a phosphatase activity. In Vibrio cholerae serotype O1 (strain ATCC 39315 / El Tor Inaba N16961), this protein is Autoinducer 2 sensor kinase/phosphatase LuxQ (luxQ).